The chain runs to 147 residues: Transcriptional regulator FurA (147 aa).

The DNA-binding stretch occupies residues 1–85 (MSSIPDYAEQ…GSVARYESRV (85 aa)). The Zn(2+) site is built by histidine 34 and glutamate 82. Positions 86–147 (GDNHHHIVCR…SISDTSRSHP (62 aa)) are dimerization. 2 residues coordinate Fe cation: aspartate 87 and histidine 89. Zn(2+)-binding residues include histidine 91, cysteine 94, cysteine 97, and aspartate 102. Position 109 (glutamate 109) interacts with Fe cation.

This sequence belongs to the Fur family. As to quaternary structure, homodimer.

Its subcellular location is the cytoplasm. In terms of biological role, represses transcription of the catalase-peroxidase gene katG and its own transcription by binding to the promoter region in a redox-dependent manner. In Mycobacterium bovis (strain ATCC BAA-935 / AF2122/97), this protein is Transcriptional regulator FurA (furA).